Here is a 366-residue protein sequence, read N- to C-terminus: NADH-quinone oxidoreductase subunit D (366 aa).

Belongs to the complex I 49 kDa subunit family. NDH-1 is composed of 14 different subunits. Subunits NuoB, C, D, E, F, and G constitute the peripheral sector of the complex.

The protein resides in the cell membrane. It carries out the reaction a quinone + NADH + 5 H(+)(in) = a quinol + NAD(+) + 4 H(+)(out). In terms of biological role, NDH-1 shuttles electrons from NADH, via FMN and iron-sulfur (Fe-S) centers, to quinones in the respiratory chain. The immediate electron acceptor for the enzyme in this species is believed to be a menaquinone. Couples the redox reaction to proton translocation (for every two electrons transferred, four hydrogen ions are translocated across the cytoplasmic membrane), and thus conserves the redox energy in a proton gradient. In Bacillus cereus (strain ATCC 14579 / DSM 31 / CCUG 7414 / JCM 2152 / NBRC 15305 / NCIMB 9373 / NCTC 2599 / NRRL B-3711), this protein is NADH-quinone oxidoreductase subunit D.